Here is a 248-residue protein sequence, read N- to C-terminus: Triosephosphate isomerase (248 aa).

A substrate-binding site is contributed by 9–11 (NWK). The Electrophile role is filled by His-95. Residue Glu-166 is the Proton acceptor of the active site. Substrate-binding positions include Gly-172, Ser-210, and 231–232 (GG).

Belongs to the triosephosphate isomerase family. In terms of assembly, homodimer.

Its subcellular location is the cytoplasm. The enzyme catalyses D-glyceraldehyde 3-phosphate = dihydroxyacetone phosphate. The protein operates within carbohydrate biosynthesis; gluconeogenesis. It participates in carbohydrate degradation; glycolysis; D-glyceraldehyde 3-phosphate from glycerone phosphate: step 1/1. Involved in the gluconeogenesis. Catalyzes stereospecifically the conversion of dihydroxyacetone phosphate (DHAP) to D-glyceraldehyde-3-phosphate (G3P). This is Triosephosphate isomerase from Delftia acidovorans (strain DSM 14801 / SPH-1).